The sequence spans 98 residues: MPSISTNIILAFTTALLGVLIYRSHLMSSLLCLEGMMLSMFILVSLTTLNLHFSLATVTPIILLVFAACEAAVGLALLVMVSNTYGMDYIQNLNLLQC.

The next 3 membrane-spanning stretches (helical) occupy residues 1–21 (MPSI…GVLI), 26–46 (LMSS…LVSL), and 61–81 (IILL…LVMV).

This sequence belongs to the complex I subunit 4L family. Core subunit of respiratory chain NADH dehydrogenase (Complex I) which is composed of 45 different subunits.

It is found in the mitochondrion inner membrane. The enzyme catalyses a ubiquinone + NADH + 5 H(+)(in) = a ubiquinol + NAD(+) + 4 H(+)(out). Functionally, core subunit of the mitochondrial membrane respiratory chain NADH dehydrogenase (Complex I) which catalyzes electron transfer from NADH through the respiratory chain, using ubiquinone as an electron acceptor. Part of the enzyme membrane arm which is embedded in the lipid bilayer and involved in proton translocation. The polypeptide is NADH-ubiquinone oxidoreductase chain 4L (MT-ND4L) (Galago senegalensis (Northern lesser bushbaby)).